A 130-amino-acid polypeptide reads, in one-letter code: Cholecystokinin (130 aa).

Residues Met1–Gly20 form the signal peptide. Residues Gln21 to Arg48 constitute a propeptide that is removed on maturation. The disordered stretch occupies residues Leu40–Val59. Tyr112 is modified (sulfotyrosine). The residue at position 118 (Phe118) is a Phenylalanine amide. A propeptide spanning residues Ser122–Ser130 is cleaved from the precursor. A sulfotyrosine mark is found at Tyr126 and Tyr128.

It belongs to the gastrin/cholecystokinin family. In terms of processing, the precursor is cleaved by proteases to produce a number of active cholecystokinins. As to expression, highly concentrated in the duodenum. Also localized in more distal parts of the small intestine.

It is found in the secreted. Its function is as follows. This peptide hormone induces gall bladder contraction and the release of pancreatic enzymes in the gut. Its function in the brain is not clear. The chain is Cholecystokinin (CCK) from Struthio camelus (Common ostrich).